A 278-amino-acid chain; its full sequence is Probable cytochrome c oxidase subunit 3 (278 aa).

6 helical membrane-spanning segments follow: residues proline 21–methionine 41, phenylalanine 46–tryptophan 66, isoleucine 89–phenylalanine 109, cysteine 174–tyrosine 194, phenylalanine 212–valine 232, and alanine 256–phenylalanine 276.

It belongs to the cytochrome c oxidase subunit 3 family.

The protein localises to the cell membrane. The catalysed reaction is 4 Fe(II)-[cytochrome c] + O2 + 8 H(+)(in) = 4 Fe(III)-[cytochrome c] + 2 H2O + 4 H(+)(out). In Rickettsia felis (strain ATCC VR-1525 / URRWXCal2) (Rickettsia azadi), this protein is Probable cytochrome c oxidase subunit 3 (ctaE).